The chain runs to 216 residues: MSSWKSQRRIWDISQTLRPGLPIWPGDTEFGFERTWRMDEGSPVNVGRMTMSTHSGTHGDAPLHYAEDGLDAASMELDSYIGECLVVDARGVSGEIDVADLPHIESADRVLFRQWDSFPHDEWRSDWLPIAAETVEWLALQGVKLIGTDAPSVDPQESKTMSAHKAVLKHDMRILEGLVLDDVPEGRYELLALPLKIVDGDAGLCRAILRELPDAG.

Trp24 is a binding site for substrate. Residues His54, His58, and Asp60 each contribute to the Zn(2+) site. Catalysis depends on His64, which acts as the Proton donor/acceptor. The Zn(2+) site is built by His164 and Glu176.

It belongs to the Cyclase 1 superfamily. KynB family. Homodimer. The cofactor is Zn(2+).

The catalysed reaction is N-formyl-L-kynurenine + H2O = L-kynurenine + formate + H(+). It functions in the pathway amino-acid degradation; L-tryptophan degradation via kynurenine pathway; L-kynurenine from L-tryptophan: step 2/2. Catalyzes the hydrolysis of N-formyl-L-kynurenine to L-kynurenine, the second step in the kynurenine pathway of tryptophan degradation. This is Kynurenine formamidase from Erythrobacter litoralis (strain HTCC2594).